A 192-amino-acid polypeptide reads, in one-letter code: Phosphoheptose isomerase (192 aa).

Residues 37–192 (LADSFKAGGK…IQLIEKEMEK (156 aa)) form the SIS domain. 52-54 (NGG) is a substrate binding site. H61 and E65 together coordinate Zn(2+). Residues E65, 93-94 (ND), 119-121 (STS), S124, and Q172 contribute to the substrate site. Zn(2+) contacts are provided by Q172 and H180.

This sequence belongs to the SIS family. GmhA subfamily. As to quaternary structure, homotetramer. It depends on Zn(2+) as a cofactor.

It is found in the cytoplasm. The enzyme catalyses 2 D-sedoheptulose 7-phosphate = D-glycero-alpha-D-manno-heptose 7-phosphate + D-glycero-beta-D-manno-heptose 7-phosphate. The protein operates within carbohydrate biosynthesis; D-glycero-D-manno-heptose 7-phosphate biosynthesis; D-glycero-alpha-D-manno-heptose 7-phosphate and D-glycero-beta-D-manno-heptose 7-phosphate from sedoheptulose 7-phosphate: step 1/1. Catalyzes the isomerization of sedoheptulose 7-phosphate in D-glycero-D-manno-heptose 7-phosphate. The chain is Phosphoheptose isomerase from Proteus mirabilis (strain HI4320).